Consider the following 241-residue polypeptide: Uridylate kinase (241 aa).

15–18 (KLSG) lines the ATP pocket. An involved in allosteric activation by GTP region spans residues 23–28 (GSEGFG). G57 serves as a coordination point for UMP. ATP contacts are provided by G58 and R62. Residues D77 and 138-145 (TGNPFCTT) contribute to the UMP site. 3 residues coordinate ATP: T165, Y171, and D174.

The protein belongs to the UMP kinase family. In terms of assembly, homohexamer.

It is found in the cytoplasm. It carries out the reaction UMP + ATP = UDP + ADP. It functions in the pathway pyrimidine metabolism; CTP biosynthesis via de novo pathway; UDP from UMP (UMPK route): step 1/1. Its activity is regulated as follows. Allosterically activated by GTP. Inhibited by UTP. Functionally, catalyzes the reversible phosphorylation of UMP to UDP. This chain is Uridylate kinase, found in Shewanella amazonensis (strain ATCC BAA-1098 / SB2B).